The following is a 107-amino-acid chain: uncharacterized protein (107 aa).

Residues 1-18 (MRTLMLIILSILIYLSSA) form the signal peptide.

This is an uncharacterized protein from Caenorhabditis elegans.